The chain runs to 106 residues: UPF0145 protein GSU2791 (106 aa).

The protein belongs to the UPF0145 family.

The sequence is that of UPF0145 protein GSU2791 from Geobacter sulfurreducens (strain ATCC 51573 / DSM 12127 / PCA).